The chain runs to 478 residues: Ninja-family protein 8 (478 aa).

Disordered regions lie at residues 1–247 (MDDD…LTPG), 337–374 (FTAK…EKKA), and 454–478 (DAPA…SAEN). Residues 23 to 35 (KARDAPLEPKAEP) show a composition bias toward basic and acidic residues. The span at 169–179 (ISISTDDGSTG) shows a compositional bias: polar residues. The segment covering 180–189 (ENEDVAESEA) has biased composition (acidic residues). Positions 233 to 242 (SFSGSESSSG) are enriched in low complexity. The span at 339–358 (AKDKADQTGTKQVDDGKKPQ) shows a compositional bias: basic and acidic residues.

The protein belongs to the Ninja family.

The protein resides in the nucleus. The sequence is that of Ninja-family protein 8 from Zea mays (Maize).